A 170-amino-acid chain; its full sequence is Tachykinin-4 (170 aa).

Positions 1-16 (MLPLLALFLLIGPAVS) are cleaved as a signal peptide. A propeptide spanning residues 17–54 (TTTRDREDLTFGAEAESWVTVNLKGIPVPSIELKLQEL) is cleaved from the precursor. A Methionine amide modification is found at Met66. A propeptide spanning residues 67–170 (GKRVEGVHPI…SQMMPRPSRP (104 aa)) is cleaved from the precursor. A disordered region spans residues 107–170 (QETNHQSAGP…SQMMPRPSRP (64 aa)). The segment covering 123–140 (SLQSQRGRSEPPNHQQHV) has biased composition (polar residues).

It belongs to the tachykinin family.

Its subcellular location is the secreted. Its function is as follows. Tachykinins are active peptides which excite neurons, evoke behavioral responses, are potent vasodilators and secretagogues, and contract (directly or indirectly) many smooth muscles. Hemokinin induces plasma extravasation, mast cell degranulation, muscle contraction, salivary secretion and scratching behavior. Increases sperm motility. Induces potent analgesic effects and may play a role in pain modulation. Promotes survival of bone marrow B lineage cells and of cultured LPS-stimulated pre-B cells and may act as an autocrine factor required for B-cell survival and proliferation. Lowers systemic arterial pressure following intravenous injection. Induces interferon-gamma production and may play a role in the inflammatory response. Shows potent affinity and specificity for the NK-1 receptor. The protein is Tachykinin-4 of Rattus norvegicus (Rat).